We begin with the raw amino-acid sequence, 452 residues long: Zinc finger protein 672 (452 aa).

4 consecutive C2H2-type zinc fingers follow at residues 14 to 36, 42 to 64, 70 to 92, and 99 to 122; these read YSCS…ERAH, FRCL…RRTH, YICS…LGAH, and CPCR…RRQH. A C2H2-type 5; degenerate zinc finger spans residues 128-150; that stretch reads RRCPLCARTFRQSALLFHQARAH. 9 C2H2-type zinc fingers span residues 163–185, 199–221, 227–249, 255–277, 283–305, 311–333, 339–361, 367–389, and 395–417; these read HRCA…ARIH, HQCG…LQTH, FKCP…QRTH, YACG…RRSH, HACA…QRIH, FACP…RRTH, YRCE…RRNH, HKCP…RKTH, and AECA…QRAH.

This sequence belongs to the krueppel C2H2-type zinc-finger protein family.

It localises to the nucleus. Functionally, may be involved in transcriptional regulation. This Homo sapiens (Human) protein is Zinc finger protein 672.